Reading from the N-terminus, the 657-residue chain is UvrABC system protein B (657 aa).

The region spanning 23–414 (KSIKKGNKYQ…KENIFHQIMR (392 aa)) is the Helicase ATP-binding domain. Residue 36 to 43 (GVTGSGKT) coordinates ATP. The Beta-hairpin signature appears at 89–112 (YYDYYQPEAYIPRTDVFIEKDSST). Positions 431–593 (QVEILFDEAK…ITPTSVKRHI (163 aa)) constitute a Helicase C-terminal domain. In terms of domain architecture, UVR spans 622-657 (AKLAKELRKQMLEAAKALEFEKAAAIRDEINKLRDL).

It belongs to the UvrB family. In terms of assembly, forms a heterotetramer with UvrA during the search for lesions. Interacts with UvrC in an incision complex.

Its subcellular location is the cytoplasm. Functionally, the UvrABC repair system catalyzes the recognition and processing of DNA lesions. A damage recognition complex composed of 2 UvrA and 2 UvrB subunits scans DNA for abnormalities. Upon binding of the UvrA(2)B(2) complex to a putative damaged site, the DNA wraps around one UvrB monomer. DNA wrap is dependent on ATP binding by UvrB and probably causes local melting of the DNA helix, facilitating insertion of UvrB beta-hairpin between the DNA strands. Then UvrB probes one DNA strand for the presence of a lesion. If a lesion is found the UvrA subunits dissociate and the UvrB-DNA preincision complex is formed. This complex is subsequently bound by UvrC and the second UvrB is released. If no lesion is found, the DNA wraps around the other UvrB subunit that will check the other stand for damage. This is UvrABC system protein B from Campylobacter jejuni (strain RM1221).